The following is a 310-amino-acid chain: Ribonuclease Z (310 aa).

Zn(2+) is bound by residues H60, H62, D64, H65, H140, D209, and H269. Catalysis depends on D64, which acts as the Proton acceptor.

This sequence belongs to the RNase Z family. In terms of assembly, homodimer. The cofactor is Zn(2+).

The catalysed reaction is Endonucleolytic cleavage of RNA, removing extra 3' nucleotides from tRNA precursor, generating 3' termini of tRNAs. A 3'-hydroxy group is left at the tRNA terminus and a 5'-phosphoryl group is left at the trailer molecule.. Zinc phosphodiesterase, which displays some tRNA 3'-processing endonuclease activity. Probably involved in tRNA maturation, by removing a 3'-trailer from precursor tRNA. The chain is Ribonuclease Z from Methanococcus maripaludis (strain C7 / ATCC BAA-1331).